A 553-amino-acid chain; its full sequence is Hydroxylamine reductase (553 aa).

[2Fe-2S] cluster-binding residues include cysteine 3, cysteine 6, cysteine 18, and cysteine 25. Histidine 249, glutamate 273, cysteine 317, cysteine 405, cysteine 433, cysteine 459, glutamate 493, and lysine 495 together coordinate hybrid [4Fe-2O-2S] cluster. Cysteine 405 is subject to Cysteine persulfide.

Belongs to the HCP family. [2Fe-2S] cluster serves as cofactor. The cofactor is hybrid [4Fe-2O-2S] cluster.

The protein localises to the cytoplasm. It catalyses the reaction A + NH4(+) + H2O = hydroxylamine + AH2 + H(+). In terms of biological role, catalyzes the reduction of hydroxylamine to form NH(3) and H(2)O. The protein is Hydroxylamine reductase of Mannheimia succiniciproducens (strain KCTC 0769BP / MBEL55E).